Here is a 184-residue protein sequence, read N- to C-terminus: ATP synthase subunit b (184 aa).

Residues 15 to 34 (VQPGLIFWTLVTFVIAAVVL) form a helical membrane-spanning segment.

It belongs to the ATPase B chain family. F-type ATPases have 2 components, F(1) - the catalytic core - and F(0) - the membrane proton channel. F(1) has five subunits: alpha(3), beta(3), gamma(1), delta(1), epsilon(1). F(0) has three main subunits: a(1), b(2) and c(10-14). The alpha and beta chains form an alternating ring which encloses part of the gamma chain. F(1) is attached to F(0) by a central stalk formed by the gamma and epsilon chains, while a peripheral stalk is formed by the delta and b chains.

Its subcellular location is the cell inner membrane. Functionally, f(1)F(0) ATP synthase produces ATP from ADP in the presence of a proton or sodium gradient. F-type ATPases consist of two structural domains, F(1) containing the extramembraneous catalytic core and F(0) containing the membrane proton channel, linked together by a central stalk and a peripheral stalk. During catalysis, ATP synthesis in the catalytic domain of F(1) is coupled via a rotary mechanism of the central stalk subunits to proton translocation. In terms of biological role, component of the F(0) channel, it forms part of the peripheral stalk, linking F(1) to F(0). The polypeptide is ATP synthase subunit b (Myxococcus xanthus (strain DK1622)).